The following is a 151-amino-acid chain: Phosphopantetheine adenylyltransferase (151 aa).

A substrate-binding site is contributed by Thr-9. ATP-binding positions include 9–10 and His-17; that span reads TF. Lys-41, Thr-73, and Arg-87 together coordinate substrate. ATP-binding positions include 88–90, Glu-98, and 122–128; these read GIR and LTSISST.

This sequence belongs to the bacterial CoaD family. Homohexamer. Mg(2+) is required as a cofactor.

It localises to the cytoplasm. It catalyses the reaction (R)-4'-phosphopantetheine + ATP + H(+) = 3'-dephospho-CoA + diphosphate. The protein operates within cofactor biosynthesis; coenzyme A biosynthesis; CoA from (R)-pantothenate: step 4/5. Its function is as follows. Reversibly transfers an adenylyl group from ATP to 4'-phosphopantetheine, yielding dephospho-CoA (dPCoA) and pyrophosphate. The chain is Phosphopantetheine adenylyltransferase from Phocaeicola vulgatus (strain ATCC 8482 / DSM 1447 / JCM 5826 / CCUG 4940 / NBRC 14291 / NCTC 11154) (Bacteroides vulgatus).